The sequence spans 197 residues: Nucleoid occlusion factor SlmA (197 aa).

The HTH tetR-type domain maps to 7 to 67 (INRREHILQC…GLIEFIEESL (61 aa)). A DNA-binding region (H-T-H motif) is located at residues 30-49 (TTAKLAAEVGVSEAALYRHF). Positions 109 to 136 (DALLGENERLRSRISQLFAKIETHLKQI) form a coiled coil.

It belongs to the nucleoid occlusion factor SlmA family. In terms of assembly, homodimer. Interacts with FtsZ.

It is found in the cytoplasm. It localises to the nucleoid. In terms of biological role, required for nucleoid occlusion (NO) phenomenon, which prevents Z-ring formation and cell division over the nucleoid. Acts as a DNA-associated cell division inhibitor that binds simultaneously chromosomal DNA and FtsZ, and disrupts the assembly of FtsZ polymers. SlmA-DNA-binding sequences (SBS) are dispersed on non-Ter regions of the chromosome, preventing FtsZ polymerization at these regions. The protein is Nucleoid occlusion factor SlmA of Shewanella halifaxensis (strain HAW-EB4).